A 581-amino-acid polypeptide reads, in one-letter code: Tricyclene synthase Oc15, chloroplastic (581 aa).

The transit peptide at 1–68 directs the protein to the chloroplast; that stretch reads MAFCISYVGA…ALCLNEHSLS (68 aa). 3 N-linked (GlcNAc...) asparagine glycosylation sites follow: Asn-27, Asn-206, and Asn-319. Asp-338 and Asp-342 together coordinate Mg(2+). Positions 338 to 342 match the DDXXD motif motif; sequence DDIFD. Residues Asn-384 and Asn-465 are each glycosylated (N-linked (GlcNAc...) asparagine). Mg(2+) contacts are provided by Asn-482, Ser-486, and Glu-490. Asn-509 carries an N-linked (GlcNAc...) asparagine glycan.

Belongs to the terpene synthase family. Tpsg subfamily. It depends on Mg(2+) as a cofactor. Requires Mn(2+) as cofactor. In terms of tissue distribution, accumulates in flowers; mostly expressed in both upper and lower petal lobes, and, to a lower extent, in tube and stamens.

It localises to the plastid. Its subcellular location is the chloroplast stroma. It catalyses the reaction (2E)-geranyl diphosphate = tricyclene + diphosphate. The enzyme catalyses (2E)-geranyl diphosphate = beta-myrcene + diphosphate. It functions in the pathway secondary metabolite biosynthesis; terpenoid biosynthesis. Functionally, contributes to floral scent emission. The protein is Tricyclene synthase Oc15, chloroplastic (Oc15) of Antirrhinum majus (Garden snapdragon).